The sequence spans 264 residues: Glutamate 5-kinase (264 aa).

Lys-15 lines the ATP pocket. Ser-55, Asp-142, and Asn-154 together coordinate substrate. ATP contacts are provided by residues 174 to 175 (SD) and 216 to 222 (TGGIATK).

Belongs to the glutamate 5-kinase family.

It is found in the cytoplasm. The enzyme catalyses L-glutamate + ATP = L-glutamyl 5-phosphate + ADP. Its pathway is amino-acid biosynthesis; L-proline biosynthesis; L-glutamate 5-semialdehyde from L-glutamate: step 1/2. Catalyzes the transfer of a phosphate group to glutamate to form L-glutamate 5-phosphate. The polypeptide is Glutamate 5-kinase (Alkaliphilus metalliredigens (strain QYMF)).